Here is a 30-residue protein sequence, read N- to C-terminus: L-amino-acid oxidase (30 aa).

This sequence belongs to the flavin monoamine oxidase family. FIG1 subfamily. In terms of assembly, monomer. This is in contrast with most of its orthologs, that are non-covalently linked homodimers. It depends on FAD as a cofactor. N-glycosylated. In terms of tissue distribution, expressed by the venom gland.

Its subcellular location is the secreted. It carries out the reaction an L-alpha-amino acid + O2 + H2O = a 2-oxocarboxylate + H2O2 + NH4(+). The enzyme catalyses L-leucine + O2 + H2O = 4-methyl-2-oxopentanoate + H2O2 + NH4(+). The catalysed reaction is L-phenylalanine + O2 + H2O = 3-phenylpyruvate + H2O2 + NH4(+). It catalyses the reaction L-tryptophan + O2 + H2O = indole-3-pyruvate + H2O2 + NH4(+). It carries out the reaction L-methionine + O2 + H2O = 4-methylsulfanyl-2-oxobutanoate + H2O2 + NH4(+). The enzyme catalyses L-2-aminohexanoate + O2 + H2O = 2-oxohexanoate + H2O2 + NH4(+). The catalysed reaction is L-tyrosine + O2 + H2O = 3-(4-hydroxyphenyl)pyruvate + H2O2 + NH4(+). Catalyzes an oxidative deamination of predominantly hydrophobic and aromatic L-amino acids, thus producing hydrogen peroxide that may contribute to the diverse toxic effects of this enzyme. Is highly active against L-Met, L-Leu, L-norleucine (L-2-aminohexanoate), L-Trp, L-Phe, moderately active against L-Tyr, and no active on L-Gly, L-Ala, L-Val, L-Pro, L-His, L-Lys, L-Arg, L-Asp, L-Asn, L-Gln, L-Glu, L-Ser, and L-Thr. Exhibits diverse biological activities, such as hemorrhage, hemolysis, edema, antibacterial and antiparasitic activities. In addition, this protein induces apoptosis. It also interacts with endothelial cells, and inhibits collagen- and ADP-induced platelet aggregation. L-LAAO family effects on platelets are controversial, since it either induces aggregation or inhibits agonist-induced aggregation. These different effects are probably due to different experimental conditions. This is L-amino-acid oxidase from Bothrops leucurus (Whitetail lancehead).